The sequence spans 145 residues: RING-H2 finger protein ATL18 (145 aa).

A signal peptide spans 1 to 29 (MISMLFPRSPLCTAAIVFYTCVCIPLGRL). The segment at 62-105 (CPICLVEFEAEDAVTHLPRCAHLFHINCIEPWLLRGHLTCPLCR) adopts an RING-type; atypical zinc-finger fold. A helical transmembrane segment spans residues 125 to 145 (STLYLSIFFFFCIFLHLLGYL).

This sequence belongs to the RING-type zinc finger family. ATL subfamily.

It is found in the membrane. The catalysed reaction is S-ubiquitinyl-[E2 ubiquitin-conjugating enzyme]-L-cysteine + [acceptor protein]-L-lysine = [E2 ubiquitin-conjugating enzyme]-L-cysteine + N(6)-ubiquitinyl-[acceptor protein]-L-lysine.. The protein operates within protein modification; protein ubiquitination. The sequence is that of RING-H2 finger protein ATL18 (ATL18) from Arabidopsis thaliana (Mouse-ear cress).